A 355-amino-acid chain; its full sequence is N-acylethanolamine-hydrolyzing acid amidase (355 aa).

A signal peptide spans 1-17; the sequence is MLLLQIILLLLPVICSA. The active-site Nucleophile is the Cys122. 3 N-linked (GlcNAc...) asparagine glycosylation sites follow: Asn150, Asn160, and Asn328.

Belongs to the acid ceramidase family. As to quaternary structure, heterodimer of an alpha and a beta subunit, produced by autocatalytic cleavage. In terms of processing, N-glycosylated. Post-translationally, autoproteolytic cleavage at pH 4.5 gives rise to the alpha and beta subunit. Cleavage gives rise to a conformation change that activates the enzyme. The same catalytic Cys residue mediates the autoproteolytic cleavage and subsequent hydrolysis of lipid substrates.

It localises to the lysosome. It is found in the membrane. It carries out the reaction N-hexadecanoylethanolamine + H2O = ethanolamine + hexadecanoate. The catalysed reaction is an N-(long-chain fatty acyl)ethanolamine + H2O = a long-chain fatty acid + ethanolamine. Its pathway is lipid metabolism; fatty acid metabolism. Its function is as follows. Degrades bioactive fatty acid amides, such as N-palmitoylethanolamine, to ethanolamine and free fatty acids. The sequence is that of N-acylethanolamine-hydrolyzing acid amidase from Caenorhabditis elegans.